We begin with the raw amino-acid sequence, 126 residues long: Holo-[acyl-carrier-protein] synthase (126 aa).

Residues D8 and E57 each contribute to the Mg(2+) site.

It belongs to the P-Pant transferase superfamily. AcpS family. Mg(2+) serves as cofactor.

Its subcellular location is the cytoplasm. The enzyme catalyses apo-[ACP] + CoA = holo-[ACP] + adenosine 3',5'-bisphosphate + H(+). Its function is as follows. Transfers the 4'-phosphopantetheine moiety from coenzyme A to a Ser of acyl-carrier-protein. This chain is Holo-[acyl-carrier-protein] synthase, found in Vibrio cholerae serotype O1 (strain ATCC 39315 / El Tor Inaba N16961).